Consider the following 260-residue polypeptide: Cytosolic Fe-S cluster assembly factor Nubp2 homolog 1 (260 aa).

Residue 14–21 participates in ATP binding; the sequence is GKGGVGKS. Cys188 and Cys191 together coordinate [4Fe-4S] cluster.

Belongs to the Mrp/NBP35 ATP-binding proteins family. NUBP2/CFD1 subfamily. In terms of assembly, heterotetramer of 2 Nubp1 and 2 Nubp2 chains. The cofactor is [4Fe-4S] cluster.

Its subcellular location is the cytoplasm. Functionally, component of the cytosolic iron-sulfur (Fe/S) protein assembly (CIA) machinery. Required for maturation of extramitochondrial Fe-S proteins. The Nubp1-Nubp2 heterotetramer forms a Fe-S scaffold complex, mediating the de novo assembly of an Fe-S cluster and its transfer to target apoproteins. The chain is Cytosolic Fe-S cluster assembly factor Nubp2 homolog 1 from Drosophila yakuba (Fruit fly).